A 115-amino-acid polypeptide reads, in one-letter code: Toxin-like structure LSTX-R1 (115 aa).

A signal peptide spans 1–18; sequence MKLSLIIIATSLVIAVVA. Residues 19-51 constitute a propeptide that is removed on maturation; the sequence is FPSKDSAATDFDKTESLENVEERVETALDERPR.

Belongs to the neurotoxin 25 family. F7 subfamily. Contains 4 disulfide bonds. In terms of tissue distribution, expressed by the venom gland.

The protein resides in the secreted. This chain is Toxin-like structure LSTX-R1, found in Lycosa singoriensis (Wolf spider).